The chain runs to 258 residues: KFLQIAVEEHYQSFDKNNIRDVTDSLWRSKKTKPRGAADPNEKIINLVNDIFGAGFDTVTTALSWSLMYLVTQPHSQKKIQESELDTAIGRERRSWLSERSMLPYKEAFILETVPTWQFVPFTIPHSTTRDTTLNGFHIPKECCVFVNQWQVNHEAELWEDPFVFRTERFLTDDSTAIDKTLSEKVMGKQVGLAWKSALGTRQWEVSFYLSTLTPNWSSAPGGESKKDRVRPIYGLSMKHKRCEHFQVKKRFSMKSSN.

This sequence belongs to the cytochrome P450 family. The cofactor is heme.

It is found in the endoplasmic reticulum membrane. The protein localises to the microsome membrane. It catalyses the reaction an organic molecule + reduced [NADPH--hemoprotein reductase] + O2 = an alcohol + oxidized [NADPH--hemoprotein reductase] + H2O + H(+). In terms of biological role, cytochromes P450 are a group of heme-thiolate monooxygenases. In liver microsomes, this enzyme is involved in an NADPH-dependent electron transport pathway. It oxidizes a variety of structurally unrelated compounds, including steroids, fatty acids, and xenobiotics. The polypeptide is Cytochrome P450 1A2 (CYP1A2) (Gallus gallus (Chicken)).